The sequence spans 395 residues: Phosphatidylinositol 4-phosphate 5-kinase-like protein 1 (395 aa).

The disordered stretch occupies residues 1-25 (MATPSLRSHEIPAHSQEAGNKSISS). The PIPK domain occupies 37-394 (ARQSRVGLFE…RLCRWAEVHT (358 aa)).

Interacts with type I phosphatidylinositol 4-phosphate 5-kinases, including PIP5K1A and PIP5K1B. Highly expressed in brain and testis, relatively to heart, spleen, lung, liver, skeletal muscle and kidney.

The protein localises to the cytoplasm. It localises to the membrane. Its function is as follows. May act as a scaffold to localize and regulate type I phosphatidylinositol 4-phosphate 5-kinases to specific compartments within the cell, where they generate PI(4,5)P2 for actin nucleation, signaling and scaffold protein recruitment and conversion to PI(3,4,5)P3. The sequence is that of Phosphatidylinositol 4-phosphate 5-kinase-like protein 1 (Pip5kl1) from Mus musculus (Mouse).